An 82-amino-acid polypeptide reads, in one-letter code: RNA-binding protein Hfq (82 aa).

Residues 10 to 70 enclose the Sm domain; that stretch reads DLFLNTVRKS…ISTIMPSQPV (61 aa).

It belongs to the Hfq family. Homohexamer.

RNA chaperone that binds small regulatory RNA (sRNAs) and mRNAs to facilitate mRNA translational regulation in response to envelope stress, environmental stress and changes in metabolite concentrations. Also binds with high specificity to tRNAs. The sequence is that of RNA-binding protein Hfq from Chelativorans sp. (strain BNC1).